We begin with the raw amino-acid sequence, 1166 residues long: ATP-dependent helicase/deoxyribonuclease subunit B (1166 aa).

Residues 1-278 (MGAEFLVGRS…LNLDITYKEL (278 aa)) form the UvrD-like helicase ATP-binding domain. Positions 10, 11, 14, 15, 16, 236, and 283 each coordinate ATP. The UvrD-like helicase C-terminal domain occupies 281–586 (TERHTKTPEL…TFSLIPPALD (306 aa)). Residues cysteine 801, cysteine 1121, cysteine 1124, and cysteine 1130 each coordinate [4Fe-4S] cluster.

The protein belongs to the helicase family. AddB/RexB type 1 subfamily. In terms of assembly, heterodimer of AddA and AddB. Requires At low magnesium concentrations there is no nuclease activity, but helicase activity is unaffected. as cofactor. Mg(2+) is required as a cofactor. The cofactor is [4Fe-4S] cluster.

In terms of biological role, the heterodimer acts both as a highly processive, ATP-dependent DNA helicase and as an ATP-dependent single-stranded exonuclease, acting in both directions. Recognizes the B.subtilis Chi site (5'-AGCGG-3') which transforms the enzyme from a helicase which degrades both DNA strands to one with only 5' to 3' exonuclease activity. This generates a double-stranded DNA with a protruding 3'-terminated single-stranded tail suitable for the initiation of homologous recombination (Chi fragment). The AddB nuclease domain is not required for Chi fragment generation but for recognition of the Chi site; this subunit has 5' -&gt; 3' nuclease activity but no helicase activity. The helicase activity of isolated AddA acts on 3'-tailed substrate and requires AddB to bind to blunt-ended DNA. RecA thread formation during DNA double-strand break repair requires RecJ or AddAB. The protein is ATP-dependent helicase/deoxyribonuclease subunit B of Bacillus subtilis (strain 168).